The following is a 338-amino-acid chain: Cytoskeleton protein RodZ (338 aa).

Residues 1-111 lie on the Cytoplasmic side of the membrane; the sequence is MNTEASQDQT…LGKKHKKRDG (111 aa). The HTH cro/C1-type domain occupies 19 to 79; that stretch reads LRQAREALGL…KLVHLPEDEL (61 aa). Positions 30–49 form a DNA-binding region, H-T-H motif; that stretch reads QQMVAERLCLKVSTIRDIEE. Residues 112-132 traverse the membrane as a helical; Signal-anchor for type II membrane protein segment; it reads WLMSFTWLIVLVVLGLTGAWW. The Periplasmic segment spans residues 133–338; that stretch reads WQNHQAQQAE…RVARLTVGVE (206 aa). Polar residues-rich tracts occupy residues 151 to 163 and 180 to 195; these read SAQL…QSVP and PVAN…NGTV. A disordered region spans residues 151–253; it reads SAQLSQNGGQ…LPTADAGVTG (103 aa). Low complexity predominate over residues 196-209; it reads PATSSAAPADTANN. A compositionally biased stretch (polar residues) spans 210-241; that stretch reads GVNTTAPQGTTSAESAVVSPSQAPLPSVSTAQ.

Belongs to the RodZ family.

Its subcellular location is the cell inner membrane. In terms of biological role, cytoskeletal protein that is involved in cell-shape control through regulation of the length of the long axis. This is Cytoskeleton protein RodZ from Yersinia enterocolitica serotype O:8 / biotype 1B (strain NCTC 13174 / 8081).